Consider the following 223-residue polypeptide: Voltage-dependent calcium channel gamma-1 subunit (223 aa).

At 1–10 (MSQTKTAKVR) the chain is on the cytoplasmic side. Residues 11–29 (VTLFFILVGGVLAMVAVVT) traverse the membrane as a helical segment. At 30-109 (DHWAVLSPHL…TQKEYSISAA (80 aa)) the chain is on the extracellular side. Asn-43 and Asn-80 each carry an N-linked (GlcNAc...) asparagine glycan. A disulfide bridge links Cys-57 with Cys-81. Residues 110 to 130 (AIAIFSLGFIIVGSICAFLSF) traverse the membrane as a helical segment. Over 131 to 135 (GNKRD) the chain is Cytoplasmic. Residues 136–156 (YLLRPASMFYAFAGLCLIVSV) form a helical membrane-spanning segment. The Extracellular portion of the chain corresponds to 157–180 (EVMRQSVKRMIDSEDTVWIEHYYS). A helical transmembrane segment spans residues 181 to 205 (WSFACACAAFILLFLGGLFLLLFSL). Residues 206–223 (PRMPQNPWESCMDAEPEH) lie on the Cytoplasmic side of the membrane.

The protein belongs to the PMP-22/EMP/MP20 family. CACNG subfamily. Component of a calcium channel complex consisting of a pore-forming alpha subunit (CACNA1S) and the ancillary subunits CACNB1 or CACNB2, CACNG1 and CACNA2D1. The channel complex contains alpha, beta, gamma and delta subunits in a 1:1:1:1 ratio, i.e. it contains either CACNB1 or CACNB2. N-glycosylated. Detected in skeletal muscle (at protein level).

Its subcellular location is the cell membrane. The protein resides in the sarcolemma. In terms of biological role, regulatory subunit of the voltage-gated calcium channel that gives rise to L-type calcium currents in skeletal muscle. Regulates channel inactivation kinetics. The polypeptide is Voltage-dependent calcium channel gamma-1 subunit (Cacng1) (Mus musculus (Mouse)).